Consider the following 335-residue polypeptide: HTH-type transcriptional regulator LacR (335 aa).

Residues 1-58 (MRTIKEIALESGYSPATVSRLLNNDPNLSITADTKNKILEIANKLGYWEDHQEKKIKP) enclose the HTH lacI-type domain. The H-T-H motif DNA-binding region spans 4–23 (IKEIALESGYSPATVSRLLN).

It participates in carbohydrate metabolism; lactose degradation [regulation]. In terms of biological role, negatively regulates the transcription of the lactose utilization genes lacL and lacM. This chain is HTH-type transcriptional regulator LacR (lacR), found in Lactobacillus helveticus (Lactobacillus suntoryeus).